A 542-amino-acid polypeptide reads, in one-letter code: Chaperonin GroEL (542 aa).

Residues 29–32 (TLGP), Lys50, 86–90 (DGTTT), Gly415, and Asp495 contribute to the ATP site.

This sequence belongs to the chaperonin (HSP60) family. In terms of assembly, forms a cylinder of 14 subunits composed of two heptameric rings stacked back-to-back. Interacts with the co-chaperonin GroES.

The protein localises to the cytoplasm. The catalysed reaction is ATP + H2O + a folded polypeptide = ADP + phosphate + an unfolded polypeptide.. Its function is as follows. Together with its co-chaperonin GroES, plays an essential role in assisting protein folding. The GroEL-GroES system forms a nano-cage that allows encapsulation of the non-native substrate proteins and provides a physical environment optimized to promote and accelerate protein folding. This chain is Chaperonin GroEL, found in Azobacteroides pseudotrichonymphae genomovar. CFP2.